The primary structure comprises 177 residues: Transcriptional repressor NrdR (177 aa).

A zinc finger spans residues 3–34 (CLFCQHTDTRVIDSRVSEDGATIRRRRECEAC). An ATP-cone domain is found at 49–139 (PVIIKKDGGR…VYRSFQDVAD (91 aa)).

It belongs to the NrdR family. Zn(2+) is required as a cofactor.

Its function is as follows. Negatively regulates transcription of bacterial ribonucleotide reductase nrd genes and operons by binding to NrdR-boxes. The chain is Transcriptional repressor NrdR from Xylella fastidiosa (strain M23).